The sequence spans 245 residues: 1-(5-phosphoribosyl)-5-[(5-phosphoribosylamino)methylideneamino] imidazole-4-carboxamide isomerase (245 aa).

D7 (proton acceptor) is an active-site residue. The active-site Proton donor is D129.

The protein belongs to the HisA/HisF family.

It localises to the cytoplasm. It catalyses the reaction 1-(5-phospho-beta-D-ribosyl)-5-[(5-phospho-beta-D-ribosylamino)methylideneamino]imidazole-4-carboxamide = 5-[(5-phospho-1-deoxy-D-ribulos-1-ylimino)methylamino]-1-(5-phospho-beta-D-ribosyl)imidazole-4-carboxamide. It participates in amino-acid biosynthesis; L-histidine biosynthesis; L-histidine from 5-phospho-alpha-D-ribose 1-diphosphate: step 4/9. This Proteus mirabilis (strain HI4320) protein is 1-(5-phosphoribosyl)-5-[(5-phosphoribosylamino)methylideneamino] imidazole-4-carboxamide isomerase.